We begin with the raw amino-acid sequence, 296 residues long: N-acetylmuramic acid 6-phosphate etherase 2 (296 aa).

The region spanning 55 to 218 (IIKSFNQGGR…STISMIGIGK (164 aa)) is the SIS domain. Glu83 functions as the Proton donor in the catalytic mechanism. Residue Glu114 is part of the active site.

The protein belongs to the GCKR-like family. MurNAc-6-P etherase subfamily. Homodimer.

It catalyses the reaction N-acetyl-D-muramate 6-phosphate + H2O = N-acetyl-D-glucosamine 6-phosphate + (R)-lactate. It functions in the pathway amino-sugar metabolism; N-acetylmuramate degradation. Its function is as follows. Specifically catalyzes the cleavage of the D-lactyl ether substituent of MurNAc 6-phosphate, producing GlcNAc 6-phosphate and D-lactate. This chain is N-acetylmuramic acid 6-phosphate etherase 2, found in Enterococcus faecalis (strain ATCC 700802 / V583).